The primary structure comprises 425 residues: Serine hydroxymethyltransferase (425 aa).

Residues L128 and 132–134 (GHL) contribute to the (6S)-5,6,7,8-tetrahydrofolate site. An N6-(pyridoxal phosphate)lysine modification is found at K237.

The protein belongs to the SHMT family. In terms of assembly, homodimer. The cofactor is pyridoxal 5'-phosphate.

It is found in the cytoplasm. It catalyses the reaction (6R)-5,10-methylene-5,6,7,8-tetrahydrofolate + glycine + H2O = (6S)-5,6,7,8-tetrahydrofolate + L-serine. Its pathway is one-carbon metabolism; tetrahydrofolate interconversion. It functions in the pathway amino-acid biosynthesis; glycine biosynthesis; glycine from L-serine: step 1/1. Catalyzes the reversible interconversion of serine and glycine with tetrahydrofolate (THF) serving as the one-carbon carrier. This reaction serves as the major source of one-carbon groups required for the biosynthesis of purines, thymidylate, methionine, and other important biomolecules. Also exhibits THF-independent aldolase activity toward beta-hydroxyamino acids, producing glycine and aldehydes, via a retro-aldol mechanism. The protein is Serine hydroxymethyltransferase of Wolbachia pipientis wMel.